The primary structure comprises 374 residues: uncharacterized protein (374 aa).

Residues 298–332 (TKEKLLKLHSEQKSLSEKINKLSGEKDIEQSMINN) are a coiled coil.

This is an uncharacterized protein from Acanthamoeba polyphaga (Amoeba).